The sequence spans 303 residues: Centromere protein O (303 aa).

Residues 38-77 are a coiled coil; sequence AALRKNQELVLELRKKRDELKAKIERHKAEIQAFRGREEA.

It belongs to the CENP-O/MCM21 family.

The protein localises to the nucleus. It is found in the chromosome. It localises to the centromere. Functionally, probable component of a centromeric complex involved in assembly of kinetochore proteins, mitotic progression and chromosome segregation. The chain is Centromere protein O (cenpo) from Xenopus tropicalis (Western clawed frog).